A 312-amino-acid chain; its full sequence is tRNA pseudouridine synthase B (312 aa).

Asp-46 serves as the catalytic Nucleophile. Substrate contacts are provided by Tyr-74, Tyr-177, and Leu-198.

Belongs to the pseudouridine synthase TruB family. Type 1 subfamily.

The catalysed reaction is uridine(55) in tRNA = pseudouridine(55) in tRNA. Its function is as follows. Responsible for synthesis of pseudouridine from uracil-55 in the psi GC loop of transfer RNAs. This Buchnera aphidicola subsp. Schizaphis graminum (strain Sg) protein is tRNA pseudouridine synthase B.